We begin with the raw amino-acid sequence, 508 residues long: Photosystem II CP47 reaction center protein (508 aa).

A run of 6 helical transmembrane segments spans residues 21–36 (SVHI…WAGS), 101–115 (IVFS…IWHW), 140–156 (GIHL…FGAF), 203–218 (IAAG…FHLS), 237–252 (VLSS…AFVV), and 457–472 (SFAL…HGSR).

The protein belongs to the PsbB/PsbC family. PsbB subfamily. In terms of assembly, PSII is composed of 1 copy each of membrane proteins PsbA, PsbB, PsbC, PsbD, PsbE, PsbF, PsbH, PsbI, PsbJ, PsbK, PsbL, PsbM, PsbT, PsbX, PsbY, PsbZ, Psb30/Ycf12, at least 3 peripheral proteins of the oxygen-evolving complex and a large number of cofactors. It forms dimeric complexes. Requires Binds multiple chlorophylls. PSII binds additional chlorophylls, carotenoids and specific lipids. as cofactor.

It is found in the plastid. The protein resides in the chloroplast thylakoid membrane. In terms of biological role, one of the components of the core complex of photosystem II (PSII). It binds chlorophyll and helps catalyze the primary light-induced photochemical processes of PSII. PSII is a light-driven water:plastoquinone oxidoreductase, using light energy to abstract electrons from H(2)O, generating O(2) and a proton gradient subsequently used for ATP formation. The protein is Photosystem II CP47 reaction center protein of Fagopyrum esculentum subsp. ancestrale (Wild buckwheat).